Reading from the N-terminus, the 348-residue chain is Phosphoribosylformylglycinamidine cyclo-ligase (348 aa).

The protein belongs to the AIR synthase family.

Its subcellular location is the cytoplasm. It carries out the reaction 2-formamido-N(1)-(5-O-phospho-beta-D-ribosyl)acetamidine + ATP = 5-amino-1-(5-phospho-beta-D-ribosyl)imidazole + ADP + phosphate + H(+). Its pathway is purine metabolism; IMP biosynthesis via de novo pathway; 5-amino-1-(5-phospho-D-ribosyl)imidazole from N(2)-formyl-N(1)-(5-phospho-D-ribosyl)glycinamide: step 2/2. The chain is Phosphoribosylformylglycinamidine cyclo-ligase from Geobacter sulfurreducens (strain ATCC 51573 / DSM 12127 / PCA).